Consider the following 83-residue polypeptide: UPF0729 protein CBG02799 (83 aa).

The segment at 51–83 (QEKKEEEEEKEKSCCSTEAENTTEVTTETKKDQ) is disordered. The segment covering 67–76 (TEAENTTEVT) has biased composition (low complexity).

It belongs to the UPF0729 family.

This chain is UPF0729 protein CBG02799, found in Caenorhabditis briggsae.